Here is a 141-residue protein sequence, read N- to C-terminus: Cystatin (141 aa).

The first 26 residues, 1 to 26 (MVHSQLPVAGPLRLLCALLLLPSATM), serve as a signal peptide directing secretion. Residues 29–129 (GGLSPRSVTD…CHFQVWSRPW (101 aa)) form the Cystatin domain. Residues 73 to 77 (QVVSG) carry the Secondary area of contact motif. 2 disulfide bridges follow: Cys91–Cys107 and Cys120–Cys140.

The protein belongs to the cystatin family. As to expression, expressed at a low level by the venom gland (at protein level).

The protein resides in the secreted. In terms of biological role, inhibits various C1 cysteine proteases including cathepsin L, papain and cathepsin B. This protein has no toxic activity and its function in the venom is unknown. It may play a role as a housekeeping or regulatory protein. This Pseudechis australis (Mulga snake) protein is Cystatin.